Consider the following 360-residue polypeptide: NAD(P)H-quinone oxidoreductase subunit 1, chloroplastic (360 aa).

A run of 8 helical transmembrane segments spans residues 30-50, 98-118, 127-147, 165-185, 203-223, 253-273, 297-317, and 340-360; these read FLPIFSLVVGIVTGVLVLVWL, FSIGPSLAVISILLSYSVIPF, FNIGIFLWIAISSIAPIGLLM, AAQSISYEIPLTLCLLSISLL, FWGWNLWRQPIGFIIFLISSL, FGLFYVASYLNLLISSLFVTV, IFGTTIGIFITLAKTYLFLFI, and FLLPISLGNLLLTTSFQVFSL.

The protein belongs to the complex I subunit 1 family. As to quaternary structure, NDH is composed of at least 16 different subunits, 5 of which are encoded in the nucleus.

It is found in the plastid. The protein resides in the chloroplast thylakoid membrane. It carries out the reaction a plastoquinone + NADH + (n+1) H(+)(in) = a plastoquinol + NAD(+) + n H(+)(out). The catalysed reaction is a plastoquinone + NADPH + (n+1) H(+)(in) = a plastoquinol + NADP(+) + n H(+)(out). Its function is as follows. NDH shuttles electrons from NAD(P)H:plastoquinone, via FMN and iron-sulfur (Fe-S) centers, to quinones in the photosynthetic chain and possibly in a chloroplast respiratory chain. The immediate electron acceptor for the enzyme in this species is believed to be plastoquinone. Couples the redox reaction to proton translocation, and thus conserves the redox energy in a proton gradient. The polypeptide is NAD(P)H-quinone oxidoreductase subunit 1, chloroplastic (Aethionema cordifolium (Lebanon stonecress)).